Consider the following 667-residue polypeptide: MRLTSLQRVGHTAVENNLSNASQRTILLKDENRLEQRLKEIPAEPGCYLMRDVEDRLLYVGKSKCLRNRVRSYFRSSSDHGPRIRLMVRQIAEIEFIVTDSEAESLVLESNLIKNQQPHFNVLLKDDKKYPYLCITWSEEYPRIFITRRRRFRNKNDRFYGPYVDVGLLRRTLLLVKRSFPLRQRPRPLHQDRTCLNYSIGRCPGVCQQKITPQDYHQVLRKVAMVFQGRNQELKVLLEKQMERYSDRMDYESAANIRDQIKGLEQLTEGQKMSLPDSSVSRDVLAIASDHRVAAVQLFQMRAGKLVNRLGFTADAVDQTLGSVLQRVIEEHYSQVDAVEVPPEVLVQYSLPQQELLVDWLSEHRGRRVQISCPQRQAKAELIELVERNAVFELSRAKSGQQQQELATEDLAQLLELTTQPRRIEGYDISHIQGSDAVASQVVFIDGLPAKQHYRKYKIKSSSIKSGHSDDFMAMAEIMRRRFRRWARVKQEGSNFENLQRCSGSALQTDGLNDWPDVVMIDGGKGQLSSAMEALRELDLHEDLVVCSLAKKHEQIFVPGQSKPLDSDPDQLGVVLLRRLRDEAHRFAVSYHRQQRGVRMNRSRLTDIPGLGPRRVRDLLAHFQSIDAIQLASVQQISQAPGLGPALALQVWTYFHPEADIALEEVA.

The region spanning 43–122 (AEPGCYLMRD…IKNQQPHFNV (80 aa)) is the GIY-YIG domain. One can recognise a UVR domain in the interval 232-267 (QELKVLLEKQMERYSDRMDYESAANIRDQIKGLEQL).

The protein belongs to the UvrC family. Interacts with UvrB in an incision complex.

Its subcellular location is the cytoplasm. In terms of biological role, the UvrABC repair system catalyzes the recognition and processing of DNA lesions. UvrC both incises the 5' and 3' sides of the lesion. The N-terminal half is responsible for the 3' incision and the C-terminal half is responsible for the 5' incision. The protein is UvrABC system protein C of Prochlorococcus marinus (strain MIT 9313).